The following is a 269-amino-acid chain: Bis(5'-nucleosyl)-tetraphosphatase, symmetrical (269 aa).

Belongs to the Ap4A hydrolase family.

The catalysed reaction is P(1),P(4)-bis(5'-adenosyl) tetraphosphate + H2O = 2 ADP + 2 H(+). Its function is as follows. Hydrolyzes diadenosine 5',5'''-P1,P4-tetraphosphate to yield ADP. This chain is Bis(5'-nucleosyl)-tetraphosphatase, symmetrical, found in Vibrio vulnificus (strain YJ016).